Reading from the N-terminus, the 337-residue chain is N-acetyl-gamma-glutamyl-phosphate reductase (337 aa).

Residue Cys145 is part of the active site.

Belongs to the NAGSA dehydrogenase family. Type 1 subfamily.

The protein localises to the cytoplasm. It carries out the reaction N-acetyl-L-glutamate 5-semialdehyde + phosphate + NADP(+) = N-acetyl-L-glutamyl 5-phosphate + NADPH + H(+). Its pathway is amino-acid biosynthesis; L-arginine biosynthesis; N(2)-acetyl-L-ornithine from L-glutamate: step 3/4. In terms of biological role, catalyzes the NADPH-dependent reduction of N-acetyl-5-glutamyl phosphate to yield N-acetyl-L-glutamate 5-semialdehyde. This Methanosarcina barkeri (strain Fusaro / DSM 804) protein is N-acetyl-gamma-glutamyl-phosphate reductase.